Here is a 197-residue protein sequence, read N- to C-terminus: dITP/XTP pyrophosphatase (197 aa).

11–16 (SHNAGK) lines the substrate pocket. Residues glutamate 42 and aspartate 71 each coordinate Mg(2+). Aspartate 71 functions as the Proton acceptor in the catalytic mechanism. Residues serine 72, 155-158 (FGYD), lysine 178, and 183-184 (HR) contribute to the substrate site.

It belongs to the HAM1 NTPase family. In terms of assembly, homodimer. Requires Mg(2+) as cofactor.

The catalysed reaction is XTP + H2O = XMP + diphosphate + H(+). It catalyses the reaction dITP + H2O = dIMP + diphosphate + H(+). It carries out the reaction ITP + H2O = IMP + diphosphate + H(+). Functionally, pyrophosphatase that catalyzes the hydrolysis of nucleoside triphosphates to their monophosphate derivatives, with a high preference for the non-canonical purine nucleotides XTP (xanthosine triphosphate), dITP (deoxyinosine triphosphate) and ITP. Seems to function as a house-cleaning enzyme that removes non-canonical purine nucleotides from the nucleotide pool, thus preventing their incorporation into DNA/RNA and avoiding chromosomal lesions. This chain is dITP/XTP pyrophosphatase, found in Pseudomonas aeruginosa (strain ATCC 15692 / DSM 22644 / CIP 104116 / JCM 14847 / LMG 12228 / 1C / PRS 101 / PAO1).